The primary structure comprises 391 residues: 8-amino-7-oxononanoate synthase (391 aa).

Arginine 20 provides a ligand contact to substrate. 106-107 contributes to the pyridoxal 5'-phosphate binding site; the sequence is GY. Residue histidine 131 participates in substrate binding. Residues serine 178, histidine 206, and threonine 234 each contribute to the pyridoxal 5'-phosphate site. Lysine 237 is modified (N6-(pyridoxal phosphate)lysine). Threonine 353 is a binding site for substrate.

The protein belongs to the class-II pyridoxal-phosphate-dependent aminotransferase family. BioF subfamily. Homodimer. Pyridoxal 5'-phosphate is required as a cofactor.

The catalysed reaction is 6-carboxyhexanoyl-[ACP] + L-alanine + H(+) = (8S)-8-amino-7-oxononanoate + holo-[ACP] + CO2. It participates in cofactor biosynthesis; biotin biosynthesis. Functionally, catalyzes the decarboxylative condensation of pimeloyl-[acyl-carrier protein] and L-alanine to produce 8-amino-7-oxononanoate (AON), [acyl-carrier protein], and carbon dioxide. The protein is 8-amino-7-oxononanoate synthase of Trichlorobacter lovleyi (strain ATCC BAA-1151 / DSM 17278 / SZ) (Geobacter lovleyi).